The chain runs to 529 residues: Bifunctional purine biosynthesis protein PurH (529 aa).

Positions 1 to 148 (MQQRRPVRRA…KNHKDVAIVV (148 aa)) constitute an MGS-like domain.

This sequence belongs to the PurH family.

It catalyses the reaction (6R)-10-formyltetrahydrofolate + 5-amino-1-(5-phospho-beta-D-ribosyl)imidazole-4-carboxamide = 5-formamido-1-(5-phospho-D-ribosyl)imidazole-4-carboxamide + (6S)-5,6,7,8-tetrahydrofolate. The catalysed reaction is IMP + H2O = 5-formamido-1-(5-phospho-D-ribosyl)imidazole-4-carboxamide. It participates in purine metabolism; IMP biosynthesis via de novo pathway; 5-formamido-1-(5-phospho-D-ribosyl)imidazole-4-carboxamide from 5-amino-1-(5-phospho-D-ribosyl)imidazole-4-carboxamide (10-formyl THF route): step 1/1. The protein operates within purine metabolism; IMP biosynthesis via de novo pathway; IMP from 5-formamido-1-(5-phospho-D-ribosyl)imidazole-4-carboxamide: step 1/1. The chain is Bifunctional purine biosynthesis protein PurH from Salmonella newport (strain SL254).